The sequence spans 567 residues: Multidrug and toxin extrusion protein 1 (567 aa).

An N-acetylmethionine modification is found at Met1. Residues 1-37 (MERTEESAPGPGGADAASERRGLRCLLLPGFLEELRA) are Cytoplasmic-facing. Ser18 carries the post-translational modification Phosphoserine. The helical transmembrane segment at 38–58 (LLVLAGPAFLAQLMMFLISFI) threads the bilayer. Residues 59–72 (SSVFCGHLGKLELD) lie on the Extracellular side of the membrane. A helical transmembrane segment spans residues 73-93 (AVTLAIAVINVTGISVGHGLS). Residues 94–120 (SACDTLISQTYGSQNLKHVGVILQRGT) are Cytoplasmic-facing. Residues 121–141 (LILLLCCFPCWALFINTEQIL) traverse the membrane as a helical segment. The Extracellular segment spans residues 142–152 (LLFRQDPDVSR). The chain crosses the membrane as a helical span at residues 153-173 (LTQTYVMIFIPALPAAFLYTL). Topologically, residues 174 to 187 (QVKYLLNQGIVLPQ) are cytoplasmic. A helical membrane pass occupies residues 188–208 (IMTGIAANLVNALANYVFLYH). The Extracellular segment spans residues 209–216 (LHLGVMGS). Residues 217-237 (ALANTISQFALAIFLFLYILW) traverse the membrane as a helical segment. Residues 238–257 (RRLHQATWGGWSWECLQDWA) lie on the Cytoplasmic side of the membrane. The chain crosses the membrane as a helical span at residues 258–277 (SFLRLAIPSMLMLCIEWWAY). At 278-295 (EVGSFLSGILGMVELGAQ) the chain is on the extracellular side. The helical transmembrane segment at 296–316 (SITYELAIIVYMIPSGFSVAA) threads the bilayer. Topologically, residues 317-336 (NVRVGNALGAGNIDQAKKSS) are cytoplasmic. The chain crosses the membrane as a helical span at residues 337-357 (AISLIVTELFAVTFCVLLLGC). Over 358-370 (KDLVGYIFTTDRD) the chain is Extracellular. Residues 371 to 391 (IVALVAQVIPIYAVSHLFEGL) form a helical membrane-spanning segment. Over 392–408 (ACTCGGILRGTGNQKVG) the chain is Cytoplasmic. The helical transmembrane segment at 409-429 (AIVNAIGYYVIGLPIGIALMF) threads the bilayer. Residues 430-437 (AAKLGVIG) are Extracellular-facing. A helical transmembrane segment spans residues 438 to 458 (LWSGIIICTTCQTTCFLAFIA). The Cytoplasmic portion of the chain corresponds to 459–543 (RLNWKRACQQ…LSGKQLALRR (85 aa)). The chain crosses the membrane as a helical span at residues 544–564 (GLLLLGVVLVLVGGILVRVYI). Residues 565–567 (RIE) lie on the Extracellular side of the membrane.

The protein belongs to the multi antimicrobial extrusion (MATE) (TC 2.A.66.1) family. Predominantly expressed in kidney and liver. Also expressed in various cells, including brain glia-like cells and capillaries, pancreatic duct cells, urinary bladder epithelium, adrenal gland cortex, heart, stomach, small intestine, thyroid gland, testes, alpha cells of the islets of Langerhans, Leydig cells, and vitamin A-storing Ito cells. Expressed in heart, stomach, small intestine, bladder, thyroid gland, adrenal gland and testes (at protein level).

The protein resides in the cell membrane. It localises to the apical cell membrane. The catalysed reaction is thiamine(out) + H(+)(in) = thiamine(in) + H(+)(out). It carries out the reaction estrone 3-sulfate(in) + H(+)(out) = estrone 3-sulfate(out) + H(+)(in). It catalyses the reaction creatinine(in) + H(+)(out) = creatinine(out) + H(+)(in). The enzyme catalyses agmatine(in) + H(+)(out) = agmatine(out) + H(+)(in). Multidrug efflux pump that functions as a H(+)/organic cation antiporter. Plays a physiological role in the excretion of cationic compounds including endogenous metabolites, drugs, toxins through the kidney and liver, into urine and bile respectively. Mediates the efflux of endogenous compounds such as creatinine, vitamin B1/thiamine, agmatine and estrone-3-sulfate. May also contribute to regulate the transport of cationic compounds in testis across the blood-testis-barrier. This chain is Multidrug and toxin extrusion protein 1 (Slc47a1), found in Mus musculus (Mouse).